The sequence spans 151 residues: Globin CTT-VIII (151 aa).

The Globin domain maps to 4–148; the sequence is PMSADQLALF…MFFYILHALE (145 aa). Positions 62 and 97 each coordinate heme b.

The protein belongs to the globin family. Homodimer.

The chain is Globin CTT-VIII (CTT-8) from Chironomus thummi thummi (Midge).